Here is a 623-residue protein sequence, read N- to C-terminus: MTTRTSPAPAGLLRPSLHCLAFAVALGSAGAALAKDVTWEDIANDDKTTGDVLQYGMGTHAQRWSPLKQVNADNVFKLTPAWSYSFGDEKQRGQESQAIVSDGVIYVTASYSRLFALDAKTGKRLWTYNHRLPDDIRPCCDVVNRGAAIYGDKVFFGTLDASVVALNKNTGKVVWKKKFADHGAGYTMTGAPTIVKDGKTGKVLLIHGSSGDEFGVVGRLFARDPDTGEEIWMRPFVEGHMGRLNGKDSTVTGDVKAPSWPDDRNSPTGKVESWSHGGGAPWQSASFDAETNTIIVGAGNPGPWNTWARTAKGGNPHDYDSLYTSGQVGVDPSSGEVKWFYQHTPNDAWDFSGNNELVLFDYKAKDGKIVKATAHADRNGFFYVVDRSNGKLQNAFPFVDNITWASHIDLKTGRPVEREGQRPPLPEPGQKHGKAVEVSPPFLGGKNWNPMAYSQDTGLFYVPANHWKEDYWTEEVSYTKGSAYLGMGFRIKRMYDDHVGSLRAMDPVSGKVVWEHKEHLPLWAGVLATAGNLVFTGTGDGYFKAFDAKSGKELWKFQTGSGIVSPPITWEQDGEQYLGVTVGYGGAVPLWGGDMADLTRPVAQGGSFWVFKLPSWDNRTASR.

The N-terminal stretch at 1–34 (MTTRTSPAPAGLLRPSLHCLAFAVALGSAGAALA) is a signal peptide. Ca(2+) is bound by residues aspartate 45, threonine 48, and aspartate 51. A pyrroloquinoline quinone-binding site is contributed by glutamate 95. A disulfide bridge connects residues cysteine 139 and cysteine 140. Pyrroloquinoline quinone contacts are provided by residues arginine 145, threonine 189, and 207-209 (HGS). Glutamate 213 is a Ca(2+) binding site. The tract at residues 244 to 281 (LNGKDSTVTGDVKAPSWPDDRNSPTGKVESWSHGGGAP) is disordered. 2 residues coordinate Ca(2+): asparagine 300 and aspartate 350. The active-site Proton acceptor is aspartate 350. Arginine 378 is a pyrroloquinoline quinone binding site. Residues 413–434 (GRPVEREGQRPPLPEPGQKHGK) are disordered. Positions 523 and 587 each coordinate pyrroloquinoline quinone.

This sequence belongs to the bacterial PQQ dehydrogenase family. As to quaternary structure, homodimer. Interacts with cytochrome c550. The cofactor is pyrroloquinoline quinone. Ca(2+) serves as cofactor. The disulfide ring formed between the two adjacent cysteine residues Cys-139 and Cys-140 is essential for efficient electron transfer at pH 7 from QEDH to its natural electron acceptor cytochrome c550.

The protein resides in the periplasm. The catalysed reaction is a primary alcohol + 2 Fe(III)-[cytochrome c] = an aldehyde + 2 Fe(II)-[cytochrome c] + 2 H(+). The enzyme catalyses ethanol + 2 Fe(III)-[cytochrome c] = acetaldehyde + 2 Fe(II)-[cytochrome c] + 2 H(+). It carries out the reaction butan-1-ol + 2 Fe(III)-[cytochrome c] = butanal + 2 Fe(II)-[cytochrome c] + 2 H(+). It catalyses the reaction propan-2-ol + 2 Fe(III)-[cytochrome c] = acetone + 2 Fe(II)-[cytochrome c] + 2 H(+). The catalysed reaction is 1-propanol + 2 Fe(III)-[cytochrome c] = propanal + 2 Fe(II)-[cytochrome c] + 2 H(+). The protein operates within alcohol metabolism; ethanol degradation; acetate from ethanol: step 1/2. With respect to regulation, inhibited by cyclopropanone ethylhemiketal. Activated by ammonia (500mM), methylamine (5mM), ethylamine (5mM), octylamine (5mM), ethanolamine (5mM) and 1-amino-2-propanol (5mM), in assays using artificial electron acceptors. Ammonia is not needed for, nor does it stimulate, the ethanol-oxidizing activity when using the natural electron acceptor cytochrome c550. Functionally, catalyzes the oxidation of ethanol and other primary alcohols to the corresponding aldehydes, except methanol, which is a very poor substrate. Uses a specific inducible cytochrome c550, encoded by the adjacent gene in the locus, as electron acceptor. Is a key enzyme of the carbon and energy metabolism during growth of P.aeruginosa on ethanol as the sole carbon and energy source. Is also able to use secondary alcohols as well as aminoalcohols like ethanolamine and 1-amino-2-propanol, and aldehydes as substrates. This Pseudomonas aeruginosa (strain ATCC 15692 / DSM 22644 / CIP 104116 / JCM 14847 / LMG 12228 / 1C / PRS 101 / PAO1) protein is Quinoprotein ethanol dehydrogenase.